The chain runs to 234 residues: Ribosomal RNA small subunit methyltransferase G (234 aa).

Residues glycine 96, leucine 101, 119 to 121 (DAT), 147 to 148 (VE), and arginine 161 each bind S-adenosyl-L-methionine.

This sequence belongs to the methyltransferase superfamily. RNA methyltransferase RsmG family.

It localises to the cytoplasm. In terms of biological role, specifically methylates the N7 position of a guanine in 16S rRNA. The sequence is that of Ribosomal RNA small subunit methyltransferase G from Chlorobium chlorochromatii (strain CaD3).